Here is a 243-residue protein sequence, read N- to C-terminus: MALLHSANPADQIIVALDGMAPDQALAFSVQVEGLRWVKVGLELFVQAGPEVVAQLREQDLRVFLDLKFHDIPATMAGACRRAAALGAELITVHACAGSEALNAAQSAAMEGAQSSGQPSPTLLAVTVLTSWEEQRLQRELAISQGIAPRVSALAQLSATAGIGGCVCSPWEAAALRAQHPEPFALITPGIRLKGAAVGDQARVMGPAEAMTAGATQLVIGRPITRANDPSAAFNACCRELRT.

Substrate contacts are provided by residues Asp18, Lys39, Asp66–Thr75, Thr130, Arg192, Gln201, Gly221, and Arg222. The active-site Proton donor is the Lys68.

Belongs to the OMP decarboxylase family. Type 1 subfamily. Homodimer.

It catalyses the reaction orotidine 5'-phosphate + H(+) = UMP + CO2. It functions in the pathway pyrimidine metabolism; UMP biosynthesis via de novo pathway; UMP from orotate: step 2/2. Its function is as follows. Catalyzes the decarboxylation of orotidine 5'-monophosphate (OMP) to uridine 5'-monophosphate (UMP). This Synechococcus sp. (strain CC9902) protein is Orotidine 5'-phosphate decarboxylase.